Consider the following 245-residue polypeptide: MTFELKHRDRSHLSHHFNAILGNPPVEWKISDHLVEYPEALRYMQERVEKILAKTAHEQVWLLEHPSLYTAGTSADKKDLLAPHLFPVYEAGRGGEFTYHGPGQRIAYIMLDLKRRKQDIRAFISALEEWIIQMLASFNIKGERREDRVGVWVKQSHCPSKKNDLSSEDKIAAIGIRVRKWISFHGVSINVNPNLAHYSGIVPCGITNHGVTSFLNLGCPVTMHDIDIALKHAFEKIFGPTIDVS.

Residues 54–242 (KTAHEQVWLL…AFEKIFGPTI (189 aa)) form the BPL/LPL catalytic domain. Substrate-binding positions include 93–100 (RGGEFTYH), 173–175 (AIG), and 186–188 (GVS). C204 (acyl-thioester intermediate) is an active-site residue.

The protein belongs to the LipB family.

The protein resides in the cytoplasm. It catalyses the reaction octanoyl-[ACP] + L-lysyl-[protein] = N(6)-octanoyl-L-lysyl-[protein] + holo-[ACP] + H(+). It participates in protein modification; protein lipoylation via endogenous pathway; protein N(6)-(lipoyl)lysine from octanoyl-[acyl-carrier-protein]: step 1/2. Its function is as follows. Catalyzes the transfer of endogenously produced octanoic acid from octanoyl-acyl-carrier-protein onto the lipoyl domains of lipoate-dependent enzymes. Lipoyl-ACP can also act as a substrate although octanoyl-ACP is likely to be the physiological substrate. This is Octanoyltransferase from Bartonella tribocorum (strain CIP 105476 / IBS 506).